Here is a 247-residue protein sequence, read N- to C-terminus: Neurotrophic factor BDNF precursor form (247 aa).

The signal sequence occupies residues 1–18 (MTILFLTMVISYFGCMKA). Positions 19 to 128 (APMKEANVRG…AANMSMRVRR (110 aa)) are excised as a propeptide. Asn-121 is a glycosylation site (N-linked (GlcNAc...) asparagine). Cystine bridges form between Cys-141–Cys-208, Cys-186–Cys-237, and Cys-196–Cys-239.

Belongs to the NGF-beta family. As to quaternary structure, monomers and homodimers. Binds to NTRK2/TRKB. Can form heterodimers with other neurotrophin family members, such as NTF3 and NTF4 (in vitro), but the physiological relevance of this is not clear. BDNF precursor form: interacts with the heterodimer formed by NGFR and SORCS2. Mature BDNF has much lower affinity for the heterodimer formed by NGFR and SORCS2. In terms of processing, N-glycosylated and glycosulfated, contrary to mature BDNF. Post-translationally, mature BDNF is produced by proteolytic removal of the propeptide, catalyzed by a FURIN family member. In addition, the precursor form is proteolytically cleaved within the propeptide, but this is not an obligatory intermediate for the production of mature BDNF. Can be converted into mature BDNF by plasmin (PLG).

It is found in the secreted. Important signaling molecule that activates signaling cascades downstream of NTRK2. During development, promotes the survival and differentiation of selected neuronal populations of the peripheral and central nervous systems. Participates in axonal growth, pathfinding and in the modulation of dendritic growth and morphology. Major regulator of synaptic transmission and plasticity at adult synapses in many regions of the CNS. The versatility of BDNF is emphasized by its contribution to a range of adaptive neuronal responses including long-term potentiation (LTP), long-term depression (LTD), certain forms of short-term synaptic plasticity, as well as homeostatic regulation of intrinsic neuronal excitability. Functionally, important signaling molecule that activates signaling cascades downstream of NTRK2. Activates signaling cascades via the heterodimeric receptor formed by NGFR and SORCS2. Signaling via NGFR and SORCS2 plays a role in synaptic plasticity and long-term depression (LTD). Binding to NGFR and SORCS2 promotes neuronal apoptosis. Promotes neuronal growth cone collapse. This chain is Neurotrophic factor BDNF precursor form (BDNF), found in Ailurus fulgens (Himalayan red panda).